A 326-amino-acid polypeptide reads, in one-letter code: tRNA uridine(34) hydroxylase (326 aa).

A Rhodanese domain is found at 122 to 218; sequence EENRCLVLDV…YGQAVGTGKW (97 aa). Cys178 (cysteine persulfide intermediate) is an active-site residue.

Belongs to the TrhO family.

The catalysed reaction is uridine(34) in tRNA + AH2 + O2 = 5-hydroxyuridine(34) in tRNA + A + H2O. Catalyzes oxygen-dependent 5-hydroxyuridine (ho5U) modification at position 34 in tRNAs. The chain is tRNA uridine(34) hydroxylase from Chlamydia abortus (strain DSM 27085 / S26/3) (Chlamydophila abortus).